Reading from the N-terminus, the 192-residue chain is Erythropoietin (192 aa).

A signal peptide spans 1–27; the sequence is MGVHECPAWLWLLLSLVSLPLGLPVPG. 2 disulfides stabilise this stretch: Cys-34–Cys-187 and Cys-56–Cys-60. The N-linked (GlcNAc...) asparagine glycan is linked to Asn-51. 2 N-linked (GlcNAc...) asparagine glycosylation sites follow: Asn-65 and Asn-110. Residue Ser-152 is glycosylated (O-linked (GalNAc...) serine).

Belongs to the EPO/TPO family. In terms of tissue distribution, produced by kidney or liver of adult mammals and by liver of fetal or neonatal mammals.

Its subcellular location is the secreted. Hormone involved in the regulation of erythrocyte proliferation and differentiation and the maintenance of a physiological level of circulating erythrocyte mass. Binds to EPOR leading to EPOR dimerization and JAK2 activation thereby activating specific downstream effectors, including STAT1 and STAT3. In Macaca fascicularis (Crab-eating macaque), this protein is Erythropoietin (EPO).